A 547-amino-acid chain; its full sequence is Pyochelin synthase PchD (547 aa).

This sequence belongs to the ATP-dependent AMP-binding enzyme family.

It carries out the reaction salicylate + holo-[ACP] + ATP = salicyl-[ACP] + AMP + diphosphate. It participates in siderophore biosynthesis. Its pathway is antifungal biosynthesis. Involved in the biosynthesis of the siderophore pyochelin. Specifically adenylates salicylate and loads it onto the holo form of PchE via a thioester linkage to the phosphopanthetheine moiety. Is also involved in the synthesis of the antifungal antibiotic dihydroaeruginoic acid (Dha or hydroxyphenyl-thiazolinyl-carboxylate), a precursor of pyochelin. The polypeptide is Pyochelin synthase PchD (Pseudomonas aeruginosa (strain UCBPP-PA14)).